A 519-amino-acid chain; its full sequence is Cytochrome P450 4A11 (519 aa).

Residues 1 to 4 (MSVS) constitute a propeptide that is removed on maturation. E321 is a binding site for heme. S440 carries the post-translational modification Phosphoserine. C457 contacts heme.

This sequence belongs to the cytochrome P450 family. Heme serves as cofactor. In terms of tissue distribution, expressed in liver. Expressed in S2 and S3 segments of proximal tubules in cortex and outer medulla of kidney.

The protein resides in the endoplasmic reticulum membrane. It localises to the microsome membrane. It carries out the reaction an organic molecule + reduced [NADPH--hemoprotein reductase] + O2 = an alcohol + oxidized [NADPH--hemoprotein reductase] + H2O + H(+). The catalysed reaction is an omega-methyl-long-chain fatty acid + reduced [NADPH--hemoprotein reductase] + O2 = an omega-hydroxy-long-chain fatty acid + oxidized [NADPH--hemoprotein reductase] + H2O + H(+). It catalyses the reaction dodecanoate + reduced [NADPH--hemoprotein reductase] + O2 = 12-hydroxydodecanoate + oxidized [NADPH--hemoprotein reductase] + H2O + H(+). The enzyme catalyses tetradecanoate + reduced [NADPH--hemoprotein reductase] + O2 = 14-hydroxytetradecanoate + oxidized [NADPH--hemoprotein reductase] + H2O + H(+). It carries out the reaction hexadecanoate + reduced [NADPH--hemoprotein reductase] + O2 = 16-hydroxyhexadecanoate + oxidized [NADPH--hemoprotein reductase] + H2O + H(+). The catalysed reaction is (9Z)-octadecenoate + reduced [NADPH--hemoprotein reductase] + O2 = 18-hydroxy-(9Z)-octadecenoate + oxidized [NADPH--hemoprotein reductase] + H2O + H(+). It catalyses the reaction (5Z,8Z,11Z,14Z)-eicosatetraenoate + reduced [NADPH--hemoprotein reductase] + O2 = 20-hydroxy-(5Z,8Z,11Z,14Z)-eicosatetraenoate + oxidized [NADPH--hemoprotein reductase] + H2O + H(+). The enzyme catalyses 22-hydroxydocosanoate + reduced [NADPH--hemoprotein reductase] + O2 = 22-oxodocosanoate + oxidized [NADPH--hemoprotein reductase] + 2 H2O + H(+). It carries out the reaction 22-oxodocosanoate + reduced [NADPH--hemoprotein reductase] + O2 = docosanedioate + oxidized [NADPH--hemoprotein reductase] + H2O + 2 H(+). The catalysed reaction is (9R,10S)-epoxy-octadecanoate + reduced [NADPH--hemoprotein reductase] + O2 = 18-hydroxy-(9R,10S)-epoxy-octadecanoate + oxidized [NADPH--hemoprotein reductase] + H2O + H(+). It catalyses the reaction 3-hydroxyhexadecanoate + reduced [NADPH--hemoprotein reductase] + O2 = 3,16-dihydroxyhexadecanoate + oxidized [NADPH--hemoprotein reductase] + H2O + H(+). It participates in lipid metabolism; arachidonate metabolism. The protein operates within lipid metabolism; oxylipin biosynthesis. Its activity is regulated as follows. Activated by cytochrome b5. Its function is as follows. A cytochrome P450 monooxygenase involved in the metabolism of fatty acids and their oxygenated derivatives (oxylipins). Mechanistically, uses molecular oxygen inserting one oxygen atom into a substrate, and reducing the second into a water molecule, with two electrons provided by NADPH via cytochrome P450 reductase (CPR; NADPH-ferrihemoprotein reductase). Catalyzes predominantly the oxidation of the terminal carbon (omega-oxidation) of saturated and unsaturated fatty acids, the catalytic efficiency decreasing in the following order: dodecanoic &gt; tetradecanoic &gt; (9Z)-octadecenoic &gt; (9Z,12Z)-octadecadienoic &gt; hexadecanoic acid. Acts as a major omega-hydroxylase for dodecanoic (lauric) acid in liver. Participates in omega-hydroxylation of (5Z,8Z,11Z,14Z)-eicosatetraenoic acid (arachidonate) to 20-hydroxyeicosatetraenoic acid (20-HETE), a signaling molecule acting both as vasoconstrictive and natriuretic with overall effect on arterial blood pressure. Can also catalyze the oxidation of the penultimate carbon (omega-1 oxidation) of fatty acids with lower efficiency. May contribute to the degradation of saturated very long-chain fatty acids (VLCFAs) such as docosanoic acid, by catalyzing successive omega-oxidations to the corresponding dicarboxylic acid, thereby initiating chain shortening. Omega-hydroxylates (9R,10S)-epoxy-octadecanoate stereoisomer. Plays a minor role in omega-oxidation of long-chain 3-hydroxy fatty acids. Has little activity toward prostaglandins A1 and E1. The sequence is that of Cytochrome P450 4A11 from Homo sapiens (Human).